Reading from the N-terminus, the 90-residue chain is Large ribosomal subunit protein uL23c (90 aa).

The protein belongs to the universal ribosomal protein uL23 family. In terms of assembly, part of the 50S ribosomal subunit.

It localises to the plastid. It is found in the chloroplast. Binds to 23S rRNA. The chain is Large ribosomal subunit protein uL23c (rpl23) from Psilotum nudum (Whisk fern).